Consider the following 89-residue polypeptide: Small ribosomal subunit protein uS15 (89 aa).

This sequence belongs to the universal ribosomal protein uS15 family. In terms of assembly, part of the 30S ribosomal subunit. Forms a bridge to the 50S subunit in the 70S ribosome, contacting the 23S rRNA.

One of the primary rRNA binding proteins, it binds directly to 16S rRNA where it helps nucleate assembly of the platform of the 30S subunit by binding and bridging several RNA helices of the 16S rRNA. Its function is as follows. Forms an intersubunit bridge (bridge B4) with the 23S rRNA of the 50S subunit in the ribosome. The sequence is that of Small ribosomal subunit protein uS15 from Mannheimia succiniciproducens (strain KCTC 0769BP / MBEL55E).